The sequence spans 445 residues: Canavalin (445 aa).

Positions 1–26 (MAFSARFPLWLLLGVVLLASVSASFA) are cleaved as a signal peptide. 2 consecutive Cupin type-1 domains span residues 49–207 (YLFR…DEIE) and 249–407 (FNLR…EEVE).

The protein belongs to the 7S seed storage protein family. Homotrimer.

In terms of biological role, seed storage protein. In Canavalia gladiata (Sword bean), this protein is Canavalin.